Reading from the N-terminus, the 348-residue chain is Holliday junction branch migration complex subunit RuvB (348 aa).

Positions 4–184 (ADRLIAASGR…FGIVQRLEFY (181 aa)) are large ATPase domain (RuvB-L). ATP contacts are provided by residues isoleucine 23, arginine 24, glycine 65, lysine 68, threonine 69, threonine 70, 131–133 (EDF), arginine 174, tyrosine 184, and arginine 221. Mg(2+) is bound at residue threonine 69. A small ATPAse domain (RuvB-S) region spans residues 185–255 (NDKDLSTIVS…VADMALNLLD (71 aa)). The segment at 258 to 348 (ERGFDHSDRR…GGDFSEPGDE (91 aa)) is head domain (RuvB-H). DNA is bound by residues arginine 294, arginine 313, and arginine 318.

It belongs to the RuvB family. Homohexamer. Forms an RuvA(8)-RuvB(12)-Holliday junction (HJ) complex. HJ DNA is sandwiched between 2 RuvA tetramers; dsDNA enters through RuvA and exits via RuvB. An RuvB hexamer assembles on each DNA strand where it exits the tetramer. Each RuvB hexamer is contacted by two RuvA subunits (via domain III) on 2 adjacent RuvB subunits; this complex drives branch migration. In the full resolvosome a probable DNA-RuvA(4)-RuvB(12)-RuvC(2) complex forms which resolves the HJ.

The protein localises to the cytoplasm. The enzyme catalyses ATP + H2O = ADP + phosphate + H(+). The RuvA-RuvB-RuvC complex processes Holliday junction (HJ) DNA during genetic recombination and DNA repair, while the RuvA-RuvB complex plays an important role in the rescue of blocked DNA replication forks via replication fork reversal (RFR). RuvA specifically binds to HJ cruciform DNA, conferring on it an open structure. The RuvB hexamer acts as an ATP-dependent pump, pulling dsDNA into and through the RuvAB complex. RuvB forms 2 homohexamers on either side of HJ DNA bound by 1 or 2 RuvA tetramers; 4 subunits per hexamer contact DNA at a time. Coordinated motions by a converter formed by DNA-disengaged RuvB subunits stimulates ATP hydrolysis and nucleotide exchange. Immobilization of the converter enables RuvB to convert the ATP-contained energy into a lever motion, pulling 2 nucleotides of DNA out of the RuvA tetramer per ATP hydrolyzed, thus driving DNA branch migration. The RuvB motors rotate together with the DNA substrate, which together with the progressing nucleotide cycle form the mechanistic basis for DNA recombination by continuous HJ branch migration. Branch migration allows RuvC to scan DNA until it finds its consensus sequence, where it cleaves and resolves cruciform DNA. The chain is Holliday junction branch migration complex subunit RuvB from Pseudomonas putida (strain ATCC 47054 / DSM 6125 / CFBP 8728 / NCIMB 11950 / KT2440).